The sequence spans 447 residues: uncharacterized protein (447 aa).

The protein localises to the mitochondrion. This is an uncharacterized protein from Dictyostelium discoideum (Social amoeba).